We begin with the raw amino-acid sequence, 494 residues long: Glutamate--tRNA ligase (494 aa).

Residues proline 9–serine 19 carry the 'HIGH' region motif. Positions lysine 249–arginine 253 match the 'KMSKS' region motif. Lysine 252 contributes to the ATP binding site.

It belongs to the class-I aminoacyl-tRNA synthetase family. Glutamate--tRNA ligase type 1 subfamily. In terms of assembly, monomer.

Its subcellular location is the cytoplasm. It carries out the reaction tRNA(Glu) + L-glutamate + ATP = L-glutamyl-tRNA(Glu) + AMP + diphosphate. Functionally, catalyzes the attachment of glutamate to tRNA(Glu) in a two-step reaction: glutamate is first activated by ATP to form Glu-AMP and then transferred to the acceptor end of tRNA(Glu). In Azobacteroides pseudotrichonymphae genomovar. CFP2, this protein is Glutamate--tRNA ligase.